The chain runs to 944 residues: Leucine--tRNA ligase (944 aa).

The 'HIGH' region signature appears at 40–51 (PYPSGAGLHVGH). The 'KMSKS' region motif lies at 718–722 (KMSKS). An ATP-binding site is contributed by Lys-721.

It belongs to the class-I aminoacyl-tRNA synthetase family.

Its subcellular location is the cytoplasm. The catalysed reaction is tRNA(Leu) + L-leucine + ATP = L-leucyl-tRNA(Leu) + AMP + diphosphate. This chain is Leucine--tRNA ligase, found in Phocaeicola vulgatus (strain ATCC 8482 / DSM 1447 / JCM 5826 / CCUG 4940 / NBRC 14291 / NCTC 11154) (Bacteroides vulgatus).